We begin with the raw amino-acid sequence, 73 residues long: Carboxysome shell vertex protein CsoS4B (73 aa).

The 68-residue stretch at 1 to 68 (MVCTQRVAGL…TDLTIGGIID (68 aa)) folds into the BMV domain.

This sequence belongs to the CcmL/EutN family. CsoS4 subfamily. In terms of assembly, homopentamer.

The protein localises to the carboxysome. In terms of biological role, probably forms vertices in the carboxysome, a polyhedral inclusion where RuBisCO (ribulose bisphosphate carboxylase, cbbL-cbbS) is sequestered. Has been modeled to induce curvature upon insertion into an otherwise flat hexagonal layer of major carboxysome subunits. Has not been identified in purified carboxysomes; it is expected to be present in very low amounts. In Prochlorococcus marinus subsp. pastoris (strain CCMP1986 / NIES-2087 / MED4), this protein is Carboxysome shell vertex protein CsoS4B.